The sequence spans 189 residues: Streptothricin acetyltransferase (189 aa).

The N-acetyltransferase domain occupies 44–189 (FALREVPADP…HALYMSMPCP (146 aa)). The tract at residues 55–76 (LVKVFPDDGGSDGEDGAEGEDA) is disordered. Acidic residues predominate over residues 63–75 (GGSDGEDGAEGED).

This sequence belongs to the acetyltransferase family. GNAT subfamily.

The catalysed reaction is streptothricin F + acetyl-CoA = N(beta)-acetylstreptothricin F + CoA + H(+). Its function is as follows. Involved in resistance to streptothricin, a broad-spectrum antibiotic produced by streptomycetes. Detoxifies streptothricin via acetylation of the beta amino group of the first beta-lysyl moiety of streptothricin. The chain is Streptothricin acetyltransferase from Streptomyces lavendulae.